A 448-amino-acid chain; its full sequence is Methylenetetrahydrofolate--tRNA-(uracil-5-)-methyltransferase TrmFO (448 aa).

An FAD-binding site is contributed by 13–18 (GAGLAG).

This sequence belongs to the MnmG family. TrmFO subfamily. Requires FAD as cofactor.

It localises to the cytoplasm. It carries out the reaction uridine(54) in tRNA + (6R)-5,10-methylene-5,6,7,8-tetrahydrofolate + NADH + H(+) = 5-methyluridine(54) in tRNA + (6S)-5,6,7,8-tetrahydrofolate + NAD(+). The enzyme catalyses uridine(54) in tRNA + (6R)-5,10-methylene-5,6,7,8-tetrahydrofolate + NADPH + H(+) = 5-methyluridine(54) in tRNA + (6S)-5,6,7,8-tetrahydrofolate + NADP(+). Its function is as follows. Catalyzes the folate-dependent formation of 5-methyl-uridine at position 54 (M-5-U54) in all tRNAs. The sequence is that of Methylenetetrahydrofolate--tRNA-(uracil-5-)-methyltransferase TrmFO from Streptococcus pyogenes serotype M3 (strain ATCC BAA-595 / MGAS315).